The sequence spans 258 residues: MMFKNFPFFKGKKDTSFDHLVEEVKKGYIPEHIAIIMDGNGRWAKRRAMPRIAGHHEGMQVVKKITKFASKLNVKVLTLYAFSTENWKRPKKEVDYLMKLPEEFLGTFLPELIEENVQVRVIGQKDRLPTHTRRAMEKAMEDTKENTGLILNFALNYGSRDEIVSAVQHMMKDNEEGKIRSEEVSEEMLSSYLMTSSLPDPELLIRTSGELRISNFMLWQIAYSEFWFTDVYWPDFKEEHLLNAITDFQHRGRRFGGV.

The active site involves aspartate 38. Aspartate 38 contributes to the Mg(2+) binding site. Substrate is bound by residues 39–42 (GNGR), tryptophan 43, arginine 51, histidine 55, and 83–85 (STE). Asparagine 86 (proton acceptor) is an active-site residue. Substrate is bound by residues tryptophan 87, arginine 89, arginine 206, and 212-214 (RIS). Glutamate 225 serves as a coordination point for Mg(2+).

Belongs to the UPP synthase family. In terms of assembly, homodimer. It depends on Mg(2+) as a cofactor.

Functionally, catalyzes the condensation of isopentenyl diphosphate (IPP) with allylic pyrophosphates generating different type of terpenoids. The chain is Isoprenyl transferase from Bacillus cereus (strain ATCC 14579 / DSM 31 / CCUG 7414 / JCM 2152 / NBRC 15305 / NCIMB 9373 / NCTC 2599 / NRRL B-3711).